The primary structure comprises 368 residues: Phospho-N-acetylmuramoyl-pentapeptide-transferase (368 aa).

The next 10 helical transmembrane spans lie at 2–22, 51–71, 80–100, 116–136, 166–186, 193–213, 234–254, 256–276, 277–297, and 340–360; these read IALI…TPLL, TLGG…SALY, PTWA…LGFI, VGGK…LALI, IVAI…WTNA, LDGL…IIAM, PLDL…FLWY, CNPA…GLFA, ALSI…LFVV, and FWIV…GNWV.

This sequence belongs to the glycosyltransferase 4 family. MraY subfamily. Mg(2+) serves as cofactor.

The protein resides in the cell membrane. The enzyme catalyses UDP-N-acetyl-alpha-D-muramoyl-L-alanyl-gamma-D-glutamyl-meso-2,6-diaminopimeloyl-D-alanyl-D-alanine + di-trans,octa-cis-undecaprenyl phosphate = di-trans,octa-cis-undecaprenyl diphospho-N-acetyl-alpha-D-muramoyl-L-alanyl-D-glutamyl-meso-2,6-diaminopimeloyl-D-alanyl-D-alanine + UMP. It participates in cell wall biogenesis; peptidoglycan biosynthesis. In terms of biological role, catalyzes the initial step of the lipid cycle reactions in the biosynthesis of the cell wall peptidoglycan: transfers peptidoglycan precursor phospho-MurNAc-pentapeptide from UDP-MurNAc-pentapeptide onto the lipid carrier undecaprenyl phosphate, yielding undecaprenyl-pyrophosphoryl-MurNAc-pentapeptide, known as lipid I. The chain is Phospho-N-acetylmuramoyl-pentapeptide-transferase from Bifidobacterium animalis subsp. lactis (strain AD011).